The sequence spans 181 residues: 6,7-dimethyl-8-ribityllumazine synthase (181 aa).

Residues F23, 61 to 63, and 85 to 87 contribute to the 5-amino-6-(D-ribitylamino)uracil site; these read SFE and AVI. 90–91 contributes to the (2S)-2-hydroxy-3-oxobutyl phosphate binding site; it reads QT. H93 functions as the Proton donor in the catalytic mechanism. F118 contributes to the 5-amino-6-(D-ribitylamino)uracil binding site. R132 provides a ligand contact to (2S)-2-hydroxy-3-oxobutyl phosphate.

This sequence belongs to the DMRL synthase family.

It catalyses the reaction (2S)-2-hydroxy-3-oxobutyl phosphate + 5-amino-6-(D-ribitylamino)uracil = 6,7-dimethyl-8-(1-D-ribityl)lumazine + phosphate + 2 H2O + H(+). It participates in cofactor biosynthesis; riboflavin biosynthesis; riboflavin from 2-hydroxy-3-oxobutyl phosphate and 5-amino-6-(D-ribitylamino)uracil: step 1/2. In terms of biological role, catalyzes the formation of 6,7-dimethyl-8-ribityllumazine by condensation of 5-amino-6-(D-ribitylamino)uracil with 3,4-dihydroxy-2-butanone 4-phosphate. This is the penultimate step in the biosynthesis of riboflavin. This is 6,7-dimethyl-8-ribityllumazine synthase from Synechococcus elongatus (strain ATCC 33912 / PCC 7942 / FACHB-805) (Anacystis nidulans R2).